The chain runs to 387 residues: Chaperone protein DnaJ (387 aa).

Residues 4-68 (DFYDVLGVSR…EKRQMYDQLG (65 aa)) form the J domain. The disordered stretch occupies residues 76–135 (EKRGGVGGGGNSSGGSARGDPFGGMGGQGSPFGDIFEQFFGGGQGQRRQGNRPRQGQNLQ). A compositionally biased stretch (gly residues) spans 80–105 (GVGGGGNSSGGSARGDPFGGMGGQGS). A compositionally biased stretch (low complexity) spans 121–133 (QRRQGNRPRQGQN). The CR-type zinc-finger motif lies at 148-230 (GVEKQFTVRR…CNGDGVTRQE (83 aa)). Residues cysteine 161, cysteine 164, cysteine 178, cysteine 181, cysteine 204, cysteine 207, cysteine 218, and cysteine 221 each coordinate Zn(2+). 4 CXXCXGXG motif repeats span residues 161–168 (CPDCNGRG), 178–185 (CPQCNGQG), 204–211 (CPRCDGSG), and 218–225 (CSTCNGDG).

It belongs to the DnaJ family. Homodimer. It depends on Zn(2+) as a cofactor.

It localises to the cytoplasm. Its function is as follows. Participates actively in the response to hyperosmotic and heat shock by preventing the aggregation of stress-denatured proteins and by disaggregating proteins, also in an autonomous, DnaK-independent fashion. Unfolded proteins bind initially to DnaJ; upon interaction with the DnaJ-bound protein, DnaK hydrolyzes its bound ATP, resulting in the formation of a stable complex. GrpE releases ADP from DnaK; ATP binding to DnaK triggers the release of the substrate protein, thus completing the reaction cycle. Several rounds of ATP-dependent interactions between DnaJ, DnaK and GrpE are required for fully efficient folding. Also involved, together with DnaK and GrpE, in the DNA replication of plasmids through activation of initiation proteins. The chain is Chaperone protein DnaJ from Haloquadratum walsbyi (strain DSM 16790 / HBSQ001).